The primary structure comprises 509 residues: Probable cytosol aminopeptidase (509 aa).

Positions 277 and 282 each coordinate Mn(2+). K289 is an active-site residue. Mn(2+) contacts are provided by D300, D359, and E361. R363 is an active-site residue.

The protein belongs to the peptidase M17 family. Mn(2+) serves as cofactor.

It is found in the cytoplasm. The enzyme catalyses Release of an N-terminal amino acid, Xaa-|-Yaa-, in which Xaa is preferably Leu, but may be other amino acids including Pro although not Arg or Lys, and Yaa may be Pro. Amino acid amides and methyl esters are also readily hydrolyzed, but rates on arylamides are exceedingly low.. It catalyses the reaction Release of an N-terminal amino acid, preferentially leucine, but not glutamic or aspartic acids.. Functionally, presumably involved in the processing and regular turnover of intracellular proteins. Catalyzes the removal of unsubstituted N-terminal amino acids from various peptides. This is Probable cytosol aminopeptidase from Chloroherpeton thalassium (strain ATCC 35110 / GB-78).